The primary structure comprises 267 residues: 3-methyl-2-oxobutanoate hydroxymethyltransferase (267 aa).

Residues D46 and D85 each coordinate Mg(2+). Residues 46–47 (DS), D85, and K115 contribute to the 3-methyl-2-oxobutanoate site. E117 is a binding site for Mg(2+). Catalysis depends on E184, which acts as the Proton acceptor.

Belongs to the PanB family. Homodecamer; pentamer of dimers. Mg(2+) is required as a cofactor.

The protein localises to the cytoplasm. The catalysed reaction is 3-methyl-2-oxobutanoate + (6R)-5,10-methylene-5,6,7,8-tetrahydrofolate + H2O = 2-dehydropantoate + (6S)-5,6,7,8-tetrahydrofolate. It participates in cofactor biosynthesis; (R)-pantothenate biosynthesis; (R)-pantoate from 3-methyl-2-oxobutanoate: step 1/2. In terms of biological role, catalyzes the reversible reaction in which hydroxymethyl group from 5,10-methylenetetrahydrofolate is transferred onto alpha-ketoisovalerate to form ketopantoate. This chain is 3-methyl-2-oxobutanoate hydroxymethyltransferase, found in Citrifermentans bemidjiense (strain ATCC BAA-1014 / DSM 16622 / JCM 12645 / Bem) (Geobacter bemidjiensis).